The primary structure comprises 318 residues: Forkhead box protein I2 (318 aa).

Residues 1–30 form a disordered region; that stretch reads MATYCDDLGPSSAPPGQAQATAHPPGYEPG. Positions 102–196 form a DNA-binding region, fork-head; it reads RPPYSYSALI…DNGNFRRKRK (95 aa).

Its subcellular location is the nucleus. Possible transcriptional activator. This is Forkhead box protein I2 (FOXI2) from Homo sapiens (Human).